Consider the following 89-residue polypeptide: UPF0175 protein APE_0276a (89 aa).

It belongs to the UPF0175 family.

This is UPF0175 protein APE_0276a from Aeropyrum pernix (strain ATCC 700893 / DSM 11879 / JCM 9820 / NBRC 100138 / K1).